The primary structure comprises 267 residues: Methylglyoxal reductase DkgB (267 aa).

The active-site Proton donor is the Tyr-39. Residue His-97 coordinates substrate. Position 179–231 (179–231 (MTLAYGKALKDEVIARIAAKHNATPAQVILAWAMGEGYSVIPSSTRRENLASS)) interacts with NADP(+).

Belongs to the aldo/keto reductase family. In terms of assembly, monomer.

The protein resides in the cytoplasm. It catalyses the reaction hydroxyacetone + NADP(+) = methylglyoxal + NADPH + H(+). Functionally, aldo-keto reductase that significantly contributes to cellular methylglyoxal detoxification by catalyzing the NADPH-dependent conversion of methylglyoxal to acetol. This is Methylglyoxal reductase DkgB from Salmonella typhimurium (strain LT2 / SGSC1412 / ATCC 700720).